The sequence spans 600 residues: MAALAPVGSPASRGPRLAAGLRLLPMLGLLQLLAEPGLGRVHHLALKDDVRHKVHLNTFGFFKDGYMVVNVSSLSLNEPEDKDVTIGFSLDRTKNDGFSSYLDEDVNYCILKKQSVSVTLLILDISRSEVRVKSPPEAGTQLPKIIFSRDEKVLGQSQEPNVNPASAGNQTQKTQDGGKSKRSTVDSKAMGEKSFSVHNNGGAVSFQFFFNISTDDQEGLYSLYFHKCLGKELPSDKFTFSLDIEITEKNPDSYLSAGEIPLPKLYISMAFFFFLSGTIWIHILRKRRNDVFKIHWLMAALPFTKSLSLVFHAIDYHYISSQGFPIEGWAVVYYITHLLKGALLFITIALIGTGWAFIKHILSDKDKKIFMIVIPLQVLANVAYIIIESTEEGTTEYGLWKDSLFLVDLLCCGAILFPVVWSIRHLQEASATDGKGDSMGPLQQRANLRAGSRIESHHFAQADLELLASSCPPASVSQRAGITAAINLAKLKLFRHYYVLIVCYIYFTRIIAFLLKLAVPFQWKWLYQLLDETATLVFFVLTGYKFRPASDNPYLQLSQEEEDLEMESVVTTSGVMESMKKVKKVTNGSVEPQGEWEGAV.

Positions 1–39 (MAALAPVGSPASRGPRLAAGLRLLPMLGLLQLLAEPGLG) are cleaved as a signal peptide. Over 40–263 (RVHHLALKDD…YLSAGEIPLP (224 aa)) the chain is Extracellular. N70 and N169 each carry an N-linked (GlcNAc...) asparagine glycan. C109 and C228 form a disulfide bridge. Over residues 157–175 (SQEPNVNPASAGNQTQKTQ) the composition is skewed to polar residues. Residues 157-185 (SQEPNVNPASAGNQTQKTQDGGKSKRSTV) are disordered. A compositionally biased stretch (basic and acidic residues) spans 176-185 (DGGKSKRSTV). A glycan (N-linked (GlcNAc...) asparagine) is linked at N211. A helical membrane pass occupies residues 264-284 (KLYISMAFFFFLSGTIWIHIL). Over 285–293 (RKRRNDVFK) the chain is Cytoplasmic. Residues 294-314 (IHWLMAALPFTKSLSLVFHAI) traverse the membrane as a helical segment. Over 315–337 (DYHYISSQGFPIEGWAVVYYITH) the chain is Extracellular. Residues 338 to 358 (LLKGALLFITIALIGTGWAFI) traverse the membrane as a helical segment. The Cytoplasmic portion of the chain corresponds to 359–368 (KHILSDKDKK). A helical transmembrane segment spans residues 369–389 (IFMIVIPLQVLANVAYIIIES). Residues 390-402 (TEEGTTEYGLWKD) lie on the Extracellular side of the membrane. Residues 403–423 (SLFLVDLLCCGAILFPVVWSI) traverse the membrane as a helical segment. The Cytoplasmic portion of the chain corresponds to 424-498 (RHLQEASATD…AKLKLFRHYY (75 aa)). A helical membrane pass occupies residues 499 to 519 (VLIVCYIYFTRIIAFLLKLAV). Residues 520–524 (PFQWK) are Extracellular-facing. Residues 525-544 (WLYQLLDETATLVFFVLTGY) traverse the membrane as a helical segment. At 545-600 (KFRPASDNPYLQLSQEEEDLEMESVVTTSGVMESMKKVKKVTNGSVEPQGEWEGAV) the chain is on the cytoplasmic side.

The protein belongs to the LU7TM family. In terms of processing, cleaved by FURIN to yield two fragments of 17 and 35 kDa that remain associated via a disulfide bond.

The protein resides in the cell membrane. It is found in the golgi apparatus. Its subcellular location is the trans-Golgi network membrane. Functionally, has been proposed to act as a receptor for neuronostatin, a peptide derived from the somatostatin/SST precursor. Involved in blood sugar regulation through the induction of glucagon in response to low glucose. In terms of biological role, (Microbial infection) Required for intoxication by Pseudomonas aeruginosa exotoxin A and Campylobacter jejuni CDT. May contribute to the retrograde transport of bacterial toxins, including cholera toxin, from the trans-Golgi network to the endoplasmic reticulum. The sequence is that of Protein GPR107 (GPR107) from Homo sapiens (Human).